The sequence spans 201 residues: Ras-related protein Ral-a (201 aa).

18 to 25 (GSGGVGKS) is a binding site for GTP. The short motif at 40–48 (YEPTKADSY) is the Effector region element. GTP is bound by residues 65-69 (DTAGQ) and 124-127 (NKCD). Residue Cys198 is modified to Cysteine methyl ester. The S-geranylgeranyl cysteine moiety is linked to residue Cys198. A propeptide spans 199-201 (TLL) (removed in mature form).

This sequence belongs to the small GTPase superfamily. Ras family.

The protein localises to the cell membrane. The protein resides in the cleavage furrow. Its subcellular location is the midbody. It is found in the midbody ring. It carries out the reaction GTP + H2O = GDP + phosphate + H(+). The chain is Ras-related protein Ral-a (Rala) from Drosophila melanogaster (Fruit fly).